The following is a 93-amino-acid chain: Large ribosomal subunit protein bL27 (93 aa).

The tract at residues 1–22 (MAHKKAGGSSRNGRDSAGRRLG) is disordered.

The protein belongs to the bacterial ribosomal protein bL27 family.

This chain is Large ribosomal subunit protein bL27, found in Parvibaculum lavamentivorans (strain DS-1 / DSM 13023 / NCIMB 13966).